A 116-amino-acid chain; its full sequence is Ribosome-binding factor A (116 aa).

This sequence belongs to the RbfA family. In terms of assembly, monomer. Binds 30S ribosomal subunits, but not 50S ribosomal subunits or 70S ribosomes.

It localises to the cytoplasm. One of several proteins that assist in the late maturation steps of the functional core of the 30S ribosomal subunit. Associates with free 30S ribosomal subunits (but not with 30S subunits that are part of 70S ribosomes or polysomes). Required for efficient processing of 16S rRNA. May interact with the 5'-terminal helix region of 16S rRNA. The protein is Ribosome-binding factor A of Streptococcus pneumoniae serotype 4 (strain ATCC BAA-334 / TIGR4).